We begin with the raw amino-acid sequence, 275 residues long: MRNTVSTFQELKNKGEKITMLTAYDYSMAKLIDSSGINGILVGDSLGMVCLGYENTLSVTMEDMLHHTKAVVRGTSNALVVGDMPFMSYQTSIYDAVYNAGRFIKEAGAHAVKLEGGATVAEEIKAIVKAQIPVMGHIGLTPQSVNMFGGFKVQGKNEKVAKKLIEDAKILEEAGAFSIVLECIPEKLSKIISESISIPTIGIGAGKYCDGQILVYQDMLSMFSDFKPKFVKSFGNIGESIKDGVSQYIKEVKEAKFPEEKHAFKIDDDVINKLY.

2 residues coordinate Mg(2+): Asp44 and Asp83. Residues 44-45 (DS), Asp83, and Lys113 each bind 3-methyl-2-oxobutanoate. Glu115 lines the Mg(2+) pocket. Glu182 serves as the catalytic Proton acceptor.

The protein belongs to the PanB family. Homodecamer; pentamer of dimers. Requires Mg(2+) as cofactor.

The protein localises to the cytoplasm. It catalyses the reaction 3-methyl-2-oxobutanoate + (6R)-5,10-methylene-5,6,7,8-tetrahydrofolate + H2O = 2-dehydropantoate + (6S)-5,6,7,8-tetrahydrofolate. It participates in cofactor biosynthesis; (R)-pantothenate biosynthesis; (R)-pantoate from 3-methyl-2-oxobutanoate: step 1/2. Catalyzes the reversible reaction in which hydroxymethyl group from 5,10-methylenetetrahydrofolate is transferred onto alpha-ketoisovalerate to form ketopantoate. This Clostridium botulinum (strain Kyoto / Type A2) protein is 3-methyl-2-oxobutanoate hydroxymethyltransferase.